Reading from the N-terminus, the 513-residue chain is Putative ribose/galactose/methyl galactoside import ATP-binding protein 2 (513 aa).

ABC transporter domains follow at residues 24–260 and 270–510; these read LSAE…VGRE and VPIG…VMEL. Residue 56–63 coordinates ATP; sequence GENGAGKS.

Belongs to the ABC transporter superfamily. Carbohydrate importer 2 (CUT2) (TC 3.A.1.2) family.

Its subcellular location is the cell inner membrane. The enzyme catalyses D-ribose(out) + ATP + H2O = D-ribose(in) + ADP + phosphate + H(+). The catalysed reaction is D-galactose(out) + ATP + H2O = D-galactose(in) + ADP + phosphate + H(+). In terms of biological role, part of an ABC transporter complex involved in carbohydrate import. Could be involved in ribose, galactose and/or methyl galactoside import. Responsible for energy coupling to the transport system. This Rhizobium etli (strain ATCC 51251 / DSM 11541 / JCM 21823 / NBRC 15573 / CFN 42) protein is Putative ribose/galactose/methyl galactoside import ATP-binding protein 2.